A 340-amino-acid polypeptide reads, in one-letter code: Ketol-acid reductoisomerase (NADP(+)) (340 aa).

The 181-residue stretch at 3–183 (VNIYYDKDCD…GGGRTGIIET (181 aa)) folds into the KARI N-terminal Rossmann domain. NADP(+) contacts are provided by residues 26 to 29 (FGSQ), Ser-54, and 84 to 87 (DELQ). His-109 is an active-site residue. Gly-135 contributes to the NADP(+) binding site. One can recognise a KARI C-terminal knotted domain in the interval 184–329 (TFKDETETDL…KKLRAMMPWI (146 aa)). The Mg(2+) site is built by Asp-192, Glu-196, Glu-228, and Glu-232. Ser-253 lines the substrate pocket.

The protein belongs to the ketol-acid reductoisomerase family. Mg(2+) serves as cofactor.

It carries out the reaction (2R)-2,3-dihydroxy-3-methylbutanoate + NADP(+) = (2S)-2-acetolactate + NADPH + H(+). The catalysed reaction is (2R,3R)-2,3-dihydroxy-3-methylpentanoate + NADP(+) = (S)-2-ethyl-2-hydroxy-3-oxobutanoate + NADPH + H(+). Its pathway is amino-acid biosynthesis; L-isoleucine biosynthesis; L-isoleucine from 2-oxobutanoate: step 2/4. The protein operates within amino-acid biosynthesis; L-valine biosynthesis; L-valine from pyruvate: step 2/4. Involved in the biosynthesis of branched-chain amino acids (BCAA). Catalyzes an alkyl-migration followed by a ketol-acid reduction of (S)-2-acetolactate (S2AL) to yield (R)-2,3-dihydroxy-isovalerate. In the isomerase reaction, S2AL is rearranged via a Mg-dependent methyl migration to produce 3-hydroxy-3-methyl-2-ketobutyrate (HMKB). In the reductase reaction, this 2-ketoacid undergoes a metal-dependent reduction by NADPH to yield (R)-2,3-dihydroxy-isovalerate. In Campylobacter curvus (strain 525.92), this protein is Ketol-acid reductoisomerase (NADP(+)).